The chain runs to 270 residues: Putative phosphoenolpyruvate synthase regulatory protein (270 aa).

154-161 serves as a coordination point for ADP; it reads GVSRAGKT.

The protein belongs to the pyruvate, phosphate/water dikinase regulatory protein family. PSRP subfamily.

The catalysed reaction is [pyruvate, water dikinase] + ADP = [pyruvate, water dikinase]-phosphate + AMP + H(+). It carries out the reaction [pyruvate, water dikinase]-phosphate + phosphate + H(+) = [pyruvate, water dikinase] + diphosphate. Functionally, bifunctional serine/threonine kinase and phosphorylase involved in the regulation of the phosphoenolpyruvate synthase (PEPS) by catalyzing its phosphorylation/dephosphorylation. The protein is Putative phosphoenolpyruvate synthase regulatory protein of Deinococcus geothermalis (strain DSM 11300 / CIP 105573 / AG-3a).